The chain runs to 220 residues: Small ribosomal subunit protein eS8 (220 aa).

Disordered regions lie at residues 1 to 41 (MGIS…LSSN) and 131 to 151 (AKKD…KKSN). A compositionally biased stretch (basic residues) spans 8-26 (MHKRRATGGKQKAWRKKRK).

Belongs to the eukaryotic ribosomal protein eS8 family.

In Oryza sativa subsp. japonica (Rice), this protein is Small ribosomal subunit protein eS8 (RPS8).